A 309-amino-acid chain; its full sequence is Olfactory receptor 1A1 (309 aa).

Topologically, residues 1–25 (MRENNQSSTLEFILLGVTGQQEQED) are extracellular. Asn5 carries an N-linked (GlcNAc...) asparagine glycan. The chain crosses the membrane as a helical span at residues 26–49 (FFYILFLFIYPITLIGNLLIVLAI). The Cytoplasmic segment spans residues 50 to 57 (CSDVHLHN). Residues 58-79 (PMYFLLANLSLVDIFFSSVTIP) form a helical membrane-spanning segment. Residues 80–100 (KMLANHLLGSKSISFGGCLTQ) are Extracellular-facing. Cys97 and Cys189 form a disulfide bridge. A helical membrane pass occupies residues 101–120 (MYFMIALGNTDSYILAAMAY). Residues 121–139 (DRAVAISRPLHYTTIMSPR) are Cytoplasmic-facing. A helical membrane pass occupies residues 140–158 (SCIWLIAGSWVIGNANALP). At 159–195 (HTLLTASLSFCGNQEVANFYCDITPLLKLSCSDIHFH) the chain is on the extracellular side. Residues 196–218 (VKMMYLGVGIFSVPLLCIIVSYI) form a helical membrane-spanning segment. Residues 219–235 (RVFSTVFQVPSTKGVLK) are Cytoplasmic-facing. The helical transmembrane segment at 236 to 258 (AFSTCGSHLTVVSLYYGTVMGMY) threads the bilayer. The Extracellular portion of the chain corresponds to 259–270 (FRPLTNYSLKDA). N-linked (GlcNAc...) asparagine glycosylation is present at Asn264. Residues 271–290 (VITVMYTAVTPMLNPFIYSL) traverse the membrane as a helical segment. The Cytoplasmic portion of the chain corresponds to 291-309 (RNRDVKAALRKLFNKRISS).

Belongs to the G-protein coupled receptor 1 family.

It localises to the cell membrane. Functionally, odorant receptor. In Pan troglodytes (Chimpanzee), this protein is Olfactory receptor 1A1 (OR1A1).